The sequence spans 307 residues: MEFVFLGTGAGVPSKGRNVSAIALQLLEERGQTWLFDCGEATQHQILHTSVRPRRIEKIFITHLHGDHIFGLPGLLGSRSFQGGTTPLTVYGPKGIKQFIEVALSVSTTHVKYPLEVVEITEEGTVFEDNEFYVETKRLSHGIECFGYRIVEKDIQGALLVDKLLEMGVKPGPIFKRLKDGEVVELEDGTILNGNEFIGPPQKGRIITILGDTRYCEASRELAQDADVLVHEATFAAEDEQQAYDYFHSTSKQAASIALQANAKRLILTHISSRYQGDTYKELLKEARELFSNTEIATDLKSFPVEK.

Positions 63, 65, 67, 68, 141, 212, and 270 each coordinate Zn(2+). Aspartate 67 serves as the catalytic Proton acceptor.

This sequence belongs to the RNase Z family. Homodimer. The cofactor is Zn(2+).

It catalyses the reaction Endonucleolytic cleavage of RNA, removing extra 3' nucleotides from tRNA precursor, generating 3' termini of tRNAs. A 3'-hydroxy group is left at the tRNA terminus and a 5'-phosphoryl group is left at the trailer molecule.. In terms of biological role, zinc phosphodiesterase, which displays some tRNA 3'-processing endonuclease activity. Probably involved in tRNA maturation, by removing a 3'-trailer from precursor tRNA. The sequence is that of Ribonuclease Z from Bacillus cereus (strain ATCC 14579 / DSM 31 / CCUG 7414 / JCM 2152 / NBRC 15305 / NCIMB 9373 / NCTC 2599 / NRRL B-3711).